The sequence spans 196 residues: Ribonuclease HII (196 aa).

The region spanning R9 to E196 is the RNase H type-2 domain. A divalent metal cation-binding residues include D15, E16, and D107.

The protein belongs to the RNase HII family. Mn(2+) serves as cofactor. It depends on Mg(2+) as a cofactor.

The protein localises to the cytoplasm. The catalysed reaction is Endonucleolytic cleavage to 5'-phosphomonoester.. Functionally, endonuclease that specifically degrades the RNA of RNA-DNA hybrids. This chain is Ribonuclease HII, found in Aeromonas hydrophila subsp. hydrophila (strain ATCC 7966 / DSM 30187 / BCRC 13018 / CCUG 14551 / JCM 1027 / KCTC 2358 / NCIMB 9240 / NCTC 8049).